Consider the following 121-residue polypeptide: Large ribosomal subunit protein uL14c (121 aa).

Belongs to the universal ribosomal protein uL14 family. In terms of assembly, part of the 50S ribosomal subunit.

The protein resides in the plastid. The protein localises to the chloroplast. Its function is as follows. Binds to 23S rRNA. The polypeptide is Large ribosomal subunit protein uL14c (Emiliania huxleyi (Coccolithophore)).